We begin with the raw amino-acid sequence, 108 residues long: Parvalbumin beta 2 (108 aa).

Ala-1 bears the N-acetylalanine mark. EF-hand domains lie at Lys-38–Gly-73 and Leu-77–Gly-108. Ca(2+)-binding residues include Asp-51, Asp-53, Ser-55, Phe-57, Glu-59, Glu-62, Asp-90, Asp-92, Asp-94, Lys-96, and Glu-101.

It belongs to the parvalbumin family.

Its function is as follows. In muscle, parvalbumin is thought to be involved in relaxation after contraction. It binds two calcium ions. The sequence is that of Parvalbumin beta 2 from Merluccius bilinearis (Silver hake).